A 487-amino-acid polypeptide reads, in one-letter code: Serine carboxypeptidase-like 37 (487 aa).

Positions 1–28 (MVKQQDWSVTTCVLLFLFLASQIHCRSG) are cleaved as a signal peptide. Asparagine 105 carries N-linked (GlcNAc...) asparagine glycosylation. 3 disulfide bridges follow: cysteine 120–cysteine 368, cysteine 280–cysteine 291, and cysteine 315–cysteine 336. Serine 215 is an active-site residue. Asparagine 317, asparagine 357, and asparagine 375 each carry an N-linked (GlcNAc...) asparagine glycan. Residue aspartate 407 is part of the active site. 2 N-linked (GlcNAc...) asparagine glycosylation sites follow: asparagine 423 and asparagine 449. The active site involves histidine 460.

It belongs to the peptidase S10 family. As to expression, expressed in seedlings, roots, leaves, stems, flowers and siliques.

It is found in the secreted. Its function is as follows. Probable carboxypeptidase. The protein is Serine carboxypeptidase-like 37 (SCPL37) of Arabidopsis thaliana (Mouse-ear cress).